The primary structure comprises 189 residues: Protein CotJC (189 aa).

The protein belongs to the manganese catalase family.

The cotJ operon proteins affect spore coat composition. They are either required for the normal formation of the inner layers of the coat or are themselves structural components of the coat. The polypeptide is Protein CotJC (cotJC) (Bacillus subtilis (strain 168)).